The chain runs to 162 residues: Interleukin-15 (162 aa).

The N-terminal stretch at 1–29 is a signal peptide; it reads MKILKPYMRNTSISCYLCFLLNSHFLTEA. Residues 30–48 constitute a propeptide that is removed on maturation; the sequence is GIHVFILGCVSVGLPKTEA. Cystine bridges form between Cys-83-Cys-133 and Cys-90-Cys-136. N-linked (GlcNAc...) asparagine glycans are attached at residues Asn-104, Asn-108, and Asn-119.

This sequence belongs to the IL-15/IL-21 family.

The protein resides in the secreted. In terms of biological role, cytokine that plays a major role in the development of inflammatory and protective immune responses to microbial invaders and parasites by modulating immune cells of both the innate and adaptive immune systems. Stimulates the proliferation and activation of natural killer cells, T-cells and B-cells and promotes the secretion of several cytokines. In monocytes, induces the production of IL8 and monocyte chemotactic protein 1/CCL2, two chemokines that attract neutrophils and monocytes respectively to sites of infection. Unlike most cytokines, which are secreted in soluble form, IL15 is expressed in association with its high affinity IL15RA on the surface of IL15-producing cells and delivers signals to target cells that express IL2RB and IL2RG receptor subunits. Binding to its receptor triggers the phosphorylation of JAK1 and JAK3 and the recruitment and subsequent phosphorylation of signal transducer and activator of transcription-3/STAT3 and STAT5. In mast cells, induces the rapid tyrosine phosphorylation of STAT6 and thereby controls mast cell survival and release of cytokines such as IL4. The sequence is that of Interleukin-15 (Il15) from Mus musculus (Mouse).